Reading from the N-terminus, the 183-residue chain is Akirin-1B (183 aa).

Residues E14–G43 are disordered. The SYVS motif motif lies at S180 to S183.

It belongs to the akirin family.

The protein resides in the nucleus. Molecular adapter that acts as a bridge between proteins, and which is involved skeletal muscle development. Functions as a signal transducer for MSTN during skeletal muscle regeneration and myogenesis. This Xenopus laevis (African clawed frog) protein is Akirin-1B (akirin1-b).